The sequence spans 449 residues: Adenylosuccinate synthetase isozyme 1 A (449 aa).

Residues 1 to 10 (MSHKSCYTNP) show a composition bias toward polar residues. Positions 1–22 (MSHKSCYTNPGTGGKRPRNDKG) are disordered. Residues 34 to 40 (GDEGKGK) and 62 to 64 (GHT) contribute to the GTP site. The active-site Proton acceptor is the Asp35. Asp35 and Gly62 together coordinate Mg(2+). Asp35 is a substrate binding site. Residues 35-38 (DEGK), 60-63 (NAGH), Thr155, Arg169, Asn248, Thr263, and Arg327 contribute to the IMP site. His63 serves as the catalytic Proton donor. 323-329 (VTTGRKR) is a binding site for substrate. GTP is bound by residues Arg329, 355-357 (KLD), and 437-440 (GVGK).

It belongs to the adenylosuccinate synthetase family. As to quaternary structure, homodimer. It depends on Mg(2+) as a cofactor.

The protein resides in the cytoplasm. It carries out the reaction IMP + L-aspartate + GTP = N(6)-(1,2-dicarboxyethyl)-AMP + GDP + phosphate + 2 H(+). It participates in purine metabolism; AMP biosynthesis via de novo pathway; AMP from IMP: step 1/2. Component of the purine nucleotide cycle (PNC), which interconverts IMP and AMP to regulate the nucleotide levels in various tissues, and which contributes to glycolysis and ammoniagenesis. Catalyzes the first committed step in the biosynthesis of AMP from IMP. This chain is Adenylosuccinate synthetase isozyme 1 A (adss1a), found in Salmo salar (Atlantic salmon).